The chain runs to 680 residues: Tumor protein 63 (680 aa).

The tract at residues 1–107 (MNFETSRCAT…MQDSDLSDPM (107 aa)) is transcription activation. The segment covering 123 to 157 (QIQNGSSSTSPYNTDHAQNSVTAPSPYAQPSSTFD) has biased composition (polar residues). Residues 123-171 (QIQNGSSSTSPYNTDHAQNSVTAPSPYAQPSSTFDALSPSPAIPSNTDY) form a disordered region. Residues 170–362 (DYPGPHSFDV…KADEDSIRKQ (193 aa)) mediate DNA binding. Positions 244, 247, 308, and 312 each coordinate Zn(2+). Over residues 351 to 360 (DRKADEDSIR) the composition is skewed to basic and acidic residues. Disordered stretches follow at residues 351–393 (DRKA…IKKR) and 435–472 (YRQQ…MNSM). The interaction with HIPK2 stretch occupies residues 352-388 (RKADEDSIRKQQVSDSTKNGDGTKRPFRQNTHGIQMT). 2 stretches are compositionally biased toward polar residues: residues 361–371 (KQQVSDSTKNG) and 379–389 (RQNTHGIQMTS). An oligomerization region spans residues 394–443 (RSPDDELLYLPVRGRETYEMLLKIKESLELMQYLPQHTIETYRQQQQQQH). Residues 437 to 450 (QQQQQQHQHLLQKQ) are compositionally biased toward low complexity. The segment covering 451-472 (TSIQSPSSYGNSSPPLNKMNSM) has biased composition (polar residues). An SAM domain is found at 541-607 (PPYPTDCSIV…WKGILDHRQL (67 aa)). Positions 610–680 (FSSPSHLLRT…KQQRIKEEGE (71 aa)) are transactivation inhibition. Residue Lys676 forms a Glycyl lysine isopeptide (Lys-Gly) (interchain with G-Cter in SUMO) linkage.

This sequence belongs to the p53 family. As to quaternary structure, binds DNA as a homotetramer. Isoform composition of the tetramer may determine transactivation activity. Isoforms Alpha and Gamma interact with HIPK2. Interacts with SSRP1, leading to stimulate coactivator activity. Isoform 1 and isoform 2 interact with WWP1. Interacts with PDS5A. Isoform 5 (via activation domain) interacts with NOC2L. Requires Zn(2+) as cofactor. May be sumoylated. Post-translationally, ubiquitinated. Polyubiquitination involves WWP1 and leads to proteasomal degradation of this protein. Widely expressed, notably in heart, kidney, placenta, prostate, skeletal muscle, testis and thymus, although the precise isoform varies according to tissue type. Progenitor cell layers of skin, breast, eye and prostate express high levels of DeltaN-type isoforms. Isoform 10 is predominantly expressed in skin squamous cell carcinomas, but not in normal skin tissues.

The protein resides in the nucleus. Its function is as follows. Acts as a sequence specific DNA binding transcriptional activator or repressor. The isoforms contain a varying set of transactivation and auto-regulating transactivation inhibiting domains thus showing an isoform specific activity. Isoform 2 activates RIPK4 transcription. May be required in conjunction with TP73/p73 for initiation of p53/TP53 dependent apoptosis in response to genotoxic insults and the presence of activated oncogenes. Involved in Notch signaling by probably inducing JAG1 and JAG2. Plays a role in the regulation of epithelial morphogenesis. The ratio of DeltaN-type and TA*-type isoforms may govern the maintenance of epithelial stem cell compartments and regulate the initiation of epithelial stratification from the undifferentiated embryonal ectoderm. Required for limb formation from the apical ectodermal ridge. Activates transcription of the p21 promoter. This Homo sapiens (Human) protein is Tumor protein 63 (TP63).